The following is a 292-amino-acid chain: Homoserine kinase (292 aa).

84 to 94 (PISRGLGSSSA) contributes to the ATP binding site.

It belongs to the GHMP kinase family. Homoserine kinase subfamily.

It is found in the cytoplasm. It carries out the reaction L-homoserine + ATP = O-phospho-L-homoserine + ADP + H(+). The protein operates within amino-acid biosynthesis; L-threonine biosynthesis; L-threonine from L-aspartate: step 4/5. Catalyzes the ATP-dependent phosphorylation of L-homoserine to L-homoserine phosphate. This chain is Homoserine kinase, found in Sulfurovum sp. (strain NBC37-1).